A 275-amino-acid chain; its full sequence is Diaminopimelate epimerase (275 aa).

Residues asparagine 13, glutamine 46, and asparagine 65 each coordinate substrate. Cysteine 74 functions as the Proton donor in the catalytic mechanism. Residues 75–76 (GN), asparagine 158, asparagine 191, and 209–210 (ER) contribute to the substrate site. The active-site Proton acceptor is the cysteine 218. 219 to 220 (GT) contacts substrate.

It belongs to the diaminopimelate epimerase family. As to quaternary structure, homodimer.

Its subcellular location is the cytoplasm. The catalysed reaction is (2S,6S)-2,6-diaminopimelate = meso-2,6-diaminopimelate. Its pathway is amino-acid biosynthesis; L-lysine biosynthesis via DAP pathway; DL-2,6-diaminopimelate from LL-2,6-diaminopimelate: step 1/1. Catalyzes the stereoinversion of LL-2,6-diaminopimelate (L,L-DAP) to meso-diaminopimelate (meso-DAP), a precursor of L-lysine and an essential component of the bacterial peptidoglycan. The sequence is that of Diaminopimelate epimerase from Nitrosomonas europaea (strain ATCC 19718 / CIP 103999 / KCTC 2705 / NBRC 14298).